A 210-amino-acid chain; its full sequence is Acetoin utilization protein AcuA (210 aa).

Residues 20 to 161 enclose the N-acetyltransferase domain; it reads LIEGPVSPED…YRKIMEKMMN (142 aa).

The protein belongs to the acetyltransferase family. Monomer.

It functions in the pathway ketone degradation; acetoin degradation. With respect to regulation, activity is sensitive to salt concentration, a high concentration of KCL (500 mM) is needed for complete inactivation. Its function is as follows. Part of the acuABC operon, which is possibly involved in the breakdown of acetoin and butanediol. Acts as an acetyltransferase inactivating acetyl-CoA synthetase AcsA via acetylation at a Lys residue. This Bacillus subtilis (strain 168) protein is Acetoin utilization protein AcuA (acuA).